A 422-amino-acid polypeptide reads, in one-letter code: MSLASSLVVSSNVELSPSSFGFLDSVRDGPQIPDSFRFSSRNRVPNLINKKQKWGNHSHSTELKYPILHESGYGSVIVASMVANPAGEIAVSAEQKVYNVVMKQAALVKRQLRTAGELDVKPDIVLPGTLSLLNEAYDRCGEVCAEYAKTFYLGTMLMTPERQKAIWAIYVWCRRTDELVDGPNASHITPTALDRWEARLEELFQGRPFDMLDAALADTVTKFPVDIQPFKDMIEGMRMDLRKSRYKNFDELYLYCYYVAGTVGLMSVPVMGIAPESQASTESVYNAALALGIANQAPPNILRDVGEDARRGRIYLPQDELAQAGLSDEDIFAGRVTDKWRNFMKNQIKRARMFFDEAEKGVLELNKASRWPVWASLLLYRQILDEIEANDYDNFTKRAYVSKAKKILALPMAYGRALLGPS.

The N-terminal 83 residues, 1 to 83 (MSLASSLVVS…GSVIVASMVA (83 aa)), are a transit peptide targeting the chloroplast.

It belongs to the phytoene/squalene synthase family. Monomer.

It is found in the plastid. It localises to the chloroplast. It carries out the reaction 2 (2E,6E,10E)-geranylgeranyl diphosphate = 15-cis-phytoene + 2 diphosphate. The protein operates within carotenoid biosynthesis; phytoene biosynthesis; all-trans-phytoene from geranylgeranyl diphosphate: step 1/1. Its function is as follows. Catalyzes the reaction from prephytoene diphosphate to phytoene. The chain is Phytoene synthase, chloroplastic (PSY) from Cucumis melo (Muskmelon).